The chain runs to 164 residues: Phosphopantetheine adenylyltransferase (164 aa).

Ser11 contacts substrate. Residues 11-12 (SF) and His19 contribute to the ATP site. Residues Lys43, Ala76, and Arg90 each coordinate substrate. ATP contacts are provided by residues 91-93 (GLR), Glu101, and 126-132 (YQHISSS).

Belongs to the bacterial CoaD family. Homohexamer. Requires Mg(2+) as cofactor.

The protein resides in the cytoplasm. It carries out the reaction (R)-4'-phosphopantetheine + ATP + H(+) = 3'-dephospho-CoA + diphosphate. Its pathway is cofactor biosynthesis; coenzyme A biosynthesis; CoA from (R)-pantothenate: step 4/5. Reversibly transfers an adenylyl group from ATP to 4'-phosphopantetheine, yielding dephospho-CoA (dPCoA) and pyrophosphate. The chain is Phosphopantetheine adenylyltransferase from Streptococcus sanguinis (strain SK36).